A 94-amino-acid polypeptide reads, in one-letter code: Integration host factor subunit beta (94 aa).

It belongs to the bacterial histone-like protein family. Heterodimer of an alpha and a beta chain.

Its function is as follows. This protein is one of the two subunits of integration host factor, a specific DNA-binding protein that functions in genetic recombination as well as in transcriptional and translational control. This Roseobacter denitrificans (strain ATCC 33942 / OCh 114) (Erythrobacter sp. (strain OCh 114)) protein is Integration host factor subunit beta.